Here is a 1348-residue protein sequence, read N- to C-terminus: MGLEAQRLPGAEEAPVRVALRVRPLLPKELLHGHQSCLRVEPERGRITLGRDRHFGFHVVLGEDTGQEAVYQACVQPLLEAFFEGFNATVFAYGQTGSGKTYTMGEASVASLHEDEQGIIPRAMAEAFKLIDENDLLDCLVHVSYLELYKEEFRDLLEVGTASRDIQLREDDRGNVVLCGVKEVDVEGLDEVLSLLEMGNAARHTGATHFNRLSSRSHTVFTVTLEQRGRTPSRLPRPAAGHLLVSKFHFVDLAGSERVLKTGSTGERLKESIQINSTLLALGNVISALGDPQRRGSHIPYRDSKITRILKDSLGGNAKTVMIACVSPSSSDFDETLNTLNYASRAQNIRNRATVNWHPEAERVPEEQAAGARGPPRHRSETRIIHRGRRVPCPAVGSAAVAAGLGAECARCRARTSAAYSLLRELQAEPGLPGAAARKVRDWLCAVEGERSTLSSASGPDSGIESAPAEDQAAQGTSGRKGDEGTQQLLTLQSQVARLEEENRDFLAALEDAMEQYKLQSDRLREQQEEMVELRLRLELAQPGWGAPGLLQGLPPGSFVPRPHTAPLGGAHTHMLGMMPSTCLPGEEVSSEQQVVSGKEVKAEVLAQADKLRSASSTTSEEEGEEEEEEEEEEEEPPRRTLYLRRNGISNWSQRAGLSPGSPPDRKGPEVCPEEPAAAIPAPQAVGSGKVPVQTRQAPAAMASEWRLAQAQQKIRELAINIRMKEELIGELVRTGKAAQALNRQHSQRIRELEQEAERVRAELCEGQRQLRELEGREPQDASERSRLQEFRKRVAAAQSQVQVLKEKKQATERLVSLSAQSETRLQELERNVQLMRRQQGQLQRRLREETEQKRRLETEMNKRQHRVKELELKHEQQQKILKIKTEEIAAFQRKRRSGSNGSVVSLEQQQKIEEQKKWLDQEMEKVLQQRRALEELGEELRKREVILAKKEALMQEKTGLESKRLRSSQALNEDIVRVSSRLEHLEKELSEKSGQLRQGSAQNQQQIRGEIDTLRQEKDSLLKQRLEIDSKLRQGSLLSPEEERTLFQLDEAIEALDAAIEYKNEAITCRQRVLRASASLLSQCEMNLMAKLSYLSSSETRALLCKYFDKVVTLREEQHQQQIAFSELEMQLEEQQRLVYWLEVALERQRLEMDRQLTLQQKEHEQNVQLLLQQGRDHLGEGLADSKRQYEARIHALEKELGRHMWINQELKQKLSAGSTAGQSQGCERRSLCLENRQCLGNEDGLHPAAPEPLWQSSLLEGVSRVWDESRDLVHAPLPLTWKRSSLCSEQGSSEESRVRETTEPPVGRVLPMGEVGLSWNFGPLPKPRWEPRRTSPGMIDVRKNPL.

The Kinesin motor domain maps to 15 to 349 (PVRVALRVRP…LNYASRAQNI (335 aa)). 94–101 (GQTGSGKT) is a binding site for ATP. The tract at residues 358 to 479 (HPEAERVPEE…EDQAAQGTSG (122 aa)) is interaction with DLG5. Residues 358–1211 (HPEAERVPEE…LGRHMWINQE (854 aa)) form an interaction with SMO region. Disordered stretches follow at residues 451–486 (RSTL…DEGT) and 607–674 (AQAD…VCPE). A coiled-coil region spans residues 480 to 542 (RKGDEGTQQL…ELRLRLELAQ (63 aa)). A compositionally biased stretch (acidic residues) spans 620–636 (SEEEGEEEEEEEEEEEE). Coiled coils occupy residues 698 to 1057 (APAA…IEAL) and 1109 to 1211 (FDKV…INQE). At serine 903 the chain carries Phosphoserine. Disordered stretches follow at residues 1288-1314 (LCSE…VLPM) and 1328-1348 (KPRW…KNPL).

This sequence belongs to the TRAFAC class myosin-kinesin ATPase superfamily. Kinesin family. Can form homodimers and interacts with microtubules. Interacts with GLI1 and SMO. Interacts with GLI2, GLI3 and SUFU. Interacts with NPHP1. Interacts with SMO and DLG5 (via PDZ4 or guanylate kinase-like domain). Post-translationally, polyubiquitinated by UBR3. In terms of tissue distribution, expressed in heart, lung, liver, kidney, testis, spleen and cerebellum.

It localises to the cell projection. The protein localises to the cilium. Its subcellular location is the cytoplasm. The protein resides in the cytoskeleton. It is found in the cilium basal body. Essential for hedgehog signaling regulation: acts both as a negative and a positive regulator of sonic hedgehog (Shh) and Indian hedgehog (Ihh) pathways, acting downstream of SMO, through both SUFU-dependent and -independent mechanisms. Involved in the regulation of microtubular dynamics. Required for proper organization of the ciliary tip and control of ciliary localization of SUFU-GLI2 complexes. Required for localization of GLI3 to cilia in response to Shh. Negatively regulates Shh signaling by preventing inappropriate activation of the transcriptional activator GLI2 in the absence of ligand. Positively regulates Shh signaling by preventing the processing of the transcription factor GLI3 into its repressor form. In keratinocytes, promotes the dissociation of SUFU-GLI2 complexes, GLI2 nuclear translocation and Shh signaling activation. Involved in the regulation of epidermal differentiation and chondrocyte development. In Mus musculus (Mouse), this protein is Kinesin-like protein KIF7 (Kif7).